The following is a 218-amino-acid chain: Thiopurine S-methyltransferase (218 aa).

Trp-10, Leu-45, Glu-66, and Arg-123 together coordinate S-adenosyl-L-methionine.

This sequence belongs to the class I-like SAM-binding methyltransferase superfamily. TPMT family.

It is found in the cytoplasm. It catalyses the reaction S-adenosyl-L-methionine + a thiopurine = S-adenosyl-L-homocysteine + a thiopurine S-methylether.. This Shewanella sp. (strain MR-7) protein is Thiopurine S-methyltransferase.